The following is a 398-amino-acid chain: MKQLTILGSTGSIGCSTLDVVRHNPDSFRVIALVAGKNVARMAEQCLEFSPRYAVMDDTSSAEQLKIMLQQHGSRTEVLSGQQAACEMAALDEVGHVMAAIVGAAGLLPTLAAIRAGKTILLANKESLVTCGRLFMDEVKRSNARLLPVDSEHNAIFQSLPQSIQHNLGYADLEQNGVTSILLTGSGGPFRETPMCDLAAMTPDQACRHPNWSMGRKISVDSATMMNKGLEYIEARWLFNASARQMEVLIHPQSVIHSMVRYQDGSVLAQLGEPDMRTPIAHTMAWPNRVTSGAQPLDFCKLSALTFSAPDYQRYPCLKLAMEAFEQGQAATTALNAANEITVAAFLAQQIRFTDIAGLNLAVLERMDLQEPASVEDVLQVDAIAREVARKQVIRLSR.

Residues T10, G11, S12, I13, G36, K37, N38, and N124 each contribute to the NADPH site. Residue K125 participates in 1-deoxy-D-xylulose 5-phosphate binding. E126 contributes to the NADPH binding site. D150 serves as a coordination point for Mn(2+). 4 residues coordinate 1-deoxy-D-xylulose 5-phosphate: S151, E152, S186, and H209. E152 is a binding site for Mn(2+). An NADPH-binding site is contributed by G215. Residues S222, N227, K228, and E231 each coordinate 1-deoxy-D-xylulose 5-phosphate. E231 contributes to the Mn(2+) binding site.

This sequence belongs to the DXR family. In terms of assembly, homodimer. Requires Mg(2+) as cofactor. It depends on Mn(2+) as a cofactor.

The enzyme catalyses 2-C-methyl-D-erythritol 4-phosphate + NADP(+) = 1-deoxy-D-xylulose 5-phosphate + NADPH + H(+). Its pathway is isoprenoid biosynthesis; isopentenyl diphosphate biosynthesis via DXP pathway; isopentenyl diphosphate from 1-deoxy-D-xylulose 5-phosphate: step 1/6. Catalyzes the NADPH-dependent rearrangement and reduction of 1-deoxy-D-xylulose-5-phosphate (DXP) to 2-C-methyl-D-erythritol 4-phosphate (MEP). This chain is 1-deoxy-D-xylulose 5-phosphate reductoisomerase, found in Salmonella paratyphi A (strain ATCC 9150 / SARB42).